The chain runs to 499 residues: Acetylcholine receptor subunit alpha-type acr-16 (499 aa).

A signal peptide spans 1-19; it reads MSSVCALLLSCALFLVAHG. Over 20-232 the chain is Extracellular; sequence SLQERRLYED…LHMRRRTLYY (213 aa). Residues asparagine 43 and asparagine 93 are each glycosylated (N-linked (GlcNAc...) asparagine). Intrachain disulfides connect cysteine 147-cysteine 161 and cysteine 211-cysteine 212. Helical transmembrane passes span 233–253, 261–281, and 289–309; these read GFNL…GFTL, ITLQ…VSEM, and VPLL…STVF. At 310 to 473 the chain is on the cytoplasmic side; that stretch reads TVYVLNLHYR…WKFAAMVVDR (164 aa). The helical transmembrane segment at 474-494 threads the bilayer; sequence LCLYVFTIFIIASTIGIFWSA. The Extracellular portion of the chain corresponds to 495-499; sequence PYLVA.

It belongs to the ligand-gated ion channel (TC 1.A.9) family. Acetylcholine receptor (TC 1.A.9.1) subfamily.

The protein resides in the postsynaptic cell membrane. The protein localises to the cell membrane. Its function is as follows. After binding acetylcholine, the AChR responds by an extensive change in conformation that affects all subunits and leads to opening of an ion-conducting channel across the plasma membrane. A subunit of the levamisole-insensitive nicotinic receptor. This Caenorhabditis briggsae protein is Acetylcholine receptor subunit alpha-type acr-16.